We begin with the raw amino-acid sequence, 254 residues long: Thiazole synthase (254 aa).

The Schiff-base intermediate with DXP role is filled by K95. 1-deoxy-D-xylulose 5-phosphate is bound by residues G156, 182-183 (AG), and 204-205 (NT).

Belongs to the ThiG family. As to quaternary structure, homotetramer. Forms heterodimers with either ThiH or ThiS.

Its subcellular location is the cytoplasm. It catalyses the reaction [ThiS sulfur-carrier protein]-C-terminal-Gly-aminoethanethioate + 2-iminoacetate + 1-deoxy-D-xylulose 5-phosphate = [ThiS sulfur-carrier protein]-C-terminal Gly-Gly + 2-[(2R,5Z)-2-carboxy-4-methylthiazol-5(2H)-ylidene]ethyl phosphate + 2 H2O + H(+). It participates in cofactor biosynthesis; thiamine diphosphate biosynthesis. Catalyzes the rearrangement of 1-deoxy-D-xylulose 5-phosphate (DXP) to produce the thiazole phosphate moiety of thiamine. Sulfur is provided by the thiocarboxylate moiety of the carrier protein ThiS. In vitro, sulfur can be provided by H(2)S. The sequence is that of Thiazole synthase from Shewanella putrefaciens (strain CN-32 / ATCC BAA-453).